The following is a 125-amino-acid chain: Large ribosomal subunit protein bL17 (125 aa).

Belongs to the bacterial ribosomal protein bL17 family. In terms of assembly, part of the 50S ribosomal subunit. Contacts protein L32.

The sequence is that of Large ribosomal subunit protein bL17 from Marinomonas sp. (strain MWYL1).